The chain runs to 390 residues: Galactokinase (390 aa).

E34 to D37 is a binding site for substrate. ATP contacts are provided by residues S68 and G122–S128. Mg(2+) contacts are provided by S128 and E160. The active-site Proton acceptor is D172. A substrate-binding site is contributed by Y221.

Belongs to the GHMP kinase family. GalK subfamily.

The protein resides in the cytoplasm. The catalysed reaction is alpha-D-galactose + ATP = alpha-D-galactose 1-phosphate + ADP + H(+). It functions in the pathway carbohydrate metabolism; galactose metabolism. In terms of biological role, catalyzes the transfer of the gamma-phosphate of ATP to D-galactose to form alpha-D-galactose-1-phosphate (Gal-1-P). The polypeptide is Galactokinase (Chloroflexus aurantiacus (strain ATCC 29366 / DSM 635 / J-10-fl)).